A 97-amino-acid polypeptide reads, in one-letter code: Large ribosomal subunit protein uL23 (97 aa).

Belongs to the universal ribosomal protein uL23 family. Part of the 50S ribosomal subunit. Contacts protein L29, and trigger factor when it is bound to the ribosome.

One of the early assembly proteins it binds 23S rRNA. One of the proteins that surrounds the polypeptide exit tunnel on the outside of the ribosome. Forms the main docking site for trigger factor binding to the ribosome. This Clostridium botulinum (strain ATCC 19397 / Type A) protein is Large ribosomal subunit protein uL23.